The chain runs to 231 residues: Orotidine 5'-phosphate decarboxylase (231 aa).

Substrate contacts are provided by residues Asp11, Lys33, 60-69 (DLKFHDIPNT), Thr120, Arg181, Gln190, Gly210, and Arg211. The active-site Proton donor is Lys62.

It belongs to the OMP decarboxylase family. Type 1 subfamily. In terms of assembly, homodimer.

It carries out the reaction orotidine 5'-phosphate + H(+) = UMP + CO2. The protein operates within pyrimidine metabolism; UMP biosynthesis via de novo pathway; UMP from orotate: step 2/2. Catalyzes the decarboxylation of orotidine 5'-monophosphate (OMP) to uridine 5'-monophosphate (UMP). This Shewanella oneidensis (strain ATCC 700550 / JCM 31522 / CIP 106686 / LMG 19005 / NCIMB 14063 / MR-1) protein is Orotidine 5'-phosphate decarboxylase.